A 573-amino-acid chain; its full sequence is Potassium-transporting ATPase potassium-binding subunit (573 aa).

10 consecutive transmembrane segments (helical) span residues 6 to 26 (ILFA…GSYI), 66 to 86 (FFSL…ILLL), 135 to 155 (ALAV…IALI), 177 to 197 (VFWI…FQGV), 257 to 277 (IQMV…GKWV), 283 to 303 (GWLI…VMTI), 382 to 402 (IFGG…LAVF), 428 to 448 (MFAL…AAVI), 493 to 513 (ITIA…VIML), and 537 to 557 (FIFA…TIFP).

This sequence belongs to the KdpA family. In terms of assembly, the system is composed of three essential subunits: KdpA, KdpB and KdpC.

The protein localises to the cell inner membrane. In terms of biological role, part of the high-affinity ATP-driven potassium transport (or Kdp) system, which catalyzes the hydrolysis of ATP coupled with the electrogenic transport of potassium into the cytoplasm. This subunit binds the periplasmic potassium ions and delivers the ions to the membrane domain of KdpB through an intramembrane tunnel. This is Potassium-transporting ATPase potassium-binding subunit from Francisella tularensis subsp. mediasiatica (strain FSC147).